The primary structure comprises 132 residues: Small ribosomal subunit protein uS8 (132 aa).

The protein belongs to the universal ribosomal protein uS8 family. In terms of assembly, part of the 30S ribosomal subunit. Contacts proteins S5 and S12.

Functionally, one of the primary rRNA binding proteins, it binds directly to 16S rRNA central domain where it helps coordinate assembly of the platform of the 30S subunit. The sequence is that of Small ribosomal subunit protein uS8 from Rhizobium johnstonii (strain DSM 114642 / LMG 32736 / 3841) (Rhizobium leguminosarum bv. viciae).